Reading from the N-terminus, the 185-residue chain is Ribosome-recycling factor (185 aa).

This sequence belongs to the RRF family.

The protein localises to the cytoplasm. Functionally, responsible for the release of ribosomes from messenger RNA at the termination of protein biosynthesis. May increase the efficiency of translation by recycling ribosomes from one round of translation to another. This chain is Ribosome-recycling factor, found in Streptococcus pyogenes serotype M28 (strain MGAS6180).